A 313-amino-acid chain; its full sequence is MGNCLSASTLPTEPNAPKSVEEGVKVFTVADLKKATNDFGNQMELGESLGYINPKTLSPAKKGVGMAVAVKKIYLANEQAFQDWLVDVEFLRHNSHPSLVKLIGYCYDRDMLFIVSEYFPNGSLGSYISRDSRPKSLPWETRLKISIGAAQCLAFLHSRKQAGLYRRYLTASKILLDSDFNARVSYFGKPKVSLDELVYTIGFSNVAPRYQYPPPEYILSGMSNMAGDVYSFGVILLKMLTGLGKDLTISAKREIKNKKYNIVEMIDPDLKNSYPLEAGRLMCELIKQCLEVDPKMRPTMQEVLDNLNAIAQI.

A lipid anchor (N-myristoyl glycine) is attached at Gly-2. The region spanning 43–311 (MELGESLGYI…EVLDNLNAIA (269 aa)) is the Protein kinase domain. ATP-binding positions include 49 to 57 (LGYINPKTL) and Lys-71.

It belongs to the protein kinase superfamily. Ser/Thr protein kinase family. As to quaternary structure, component of an immune signaling complex made of, at least, SZE1, BKN2/SZE2, ZAR1 and ZED1. Interacts directly with ZED1, ZAR1 and Pseudomonas syringae HOPZ1A at the plasma membrane. Post-translationally, N-terminal myristoylation is critical for plasma membrane localization and implication in defense responses. Autophosphorylated. In terms of tissue distribution, expressed in roots, seedlings, rosette leaves, floral organs, siliques and inflorescence stems.

The protein localises to the cell membrane. The enzyme catalyses L-seryl-[protein] + ATP = O-phospho-L-seryl-[protein] + ADP + H(+). It carries out the reaction L-threonyl-[protein] + ATP = O-phospho-L-threonyl-[protein] + ADP + H(+). Its function is as follows. Together with BKN2/SZE2 and ZED1, required for effector-triggered immunity (e.g. Pseudomonas syringae effector type III HopZ1a) via the activation of ZAR1, thus being essential for resistance against P.syringae pv. tomato DC3000 expressing HopZ1a. The sequence is that of Serine/threonine-protein kinase SZE1 from Arabidopsis thaliana (Mouse-ear cress).